A 401-amino-acid chain; its full sequence is Inactive (1R,4R,5S)-(-)-guaia-6,10(14)-diene synthase (401 aa).

A disordered region spans residues 1–20 (MVKFDSGSESEMTNGDELHI). Mg(2+) contacts are provided by Asp-134 and Glu-139. The DDXXD motif motif lies at 134–138 (DDQFD). Position 242 (Arg-242) interacts with substrate. Ser-292 is a Mg(2+) binding site. Substrate is bound at residue Lys-295. Position 296 (Asp-296) interacts with Mg(2+). 375–376 (RY) serves as a coordination point for substrate.

This sequence belongs to the terpene synthase family. Mg(2+) serves as cofactor.

The sequence is that of Inactive (1R,4R,5S)-(-)-guaia-6,10(14)-diene synthase from Gibberella fujikuroi (strain CBS 195.34 / IMI 58289 / NRRL A-6831) (Bakanae and foot rot disease fungus).